Reading from the N-terminus, the 273-residue chain is Proteasome subunit alpha (273 aa).

A disordered region spans residues 231–273 (DDGAAGQPPSSSDTDTSAAEARKPTASAGSADLEGPEPERPDS). Over residues 238–249 (PPSSSDTDTSAA) the composition is skewed to low complexity.

Belongs to the peptidase T1A family. In terms of assembly, the 20S proteasome core is composed of 14 alpha and 14 beta subunits that assemble into four stacked heptameric rings, resulting in a barrel-shaped structure. The two inner rings, each composed of seven catalytic beta subunits, are sandwiched by two outer rings, each composed of seven alpha subunits. The catalytic chamber with the active sites is on the inside of the barrel. Has a gated structure, the ends of the cylinder being occluded by the N-termini of the alpha-subunits. Is capped by the proteasome-associated ATPase, ARC.

It localises to the cytoplasm. Its pathway is protein degradation; proteasomal Pup-dependent pathway. With respect to regulation, the formation of the proteasomal ATPase ARC-20S proteasome complex, likely via the docking of the C-termini of ARC into the intersubunit pockets in the alpha-rings, may trigger opening of the gate for substrate entry. Interconversion between the open-gate and close-gate conformations leads to a dynamic regulation of the 20S proteasome proteolysis activity. In terms of biological role, component of the proteasome core, a large protease complex with broad specificity involved in protein degradation. This Salinispora arenicola (strain CNS-205) protein is Proteasome subunit alpha.